A 92-amino-acid chain; its full sequence is Small ribosomal subunit protein uS19 (92 aa).

Belongs to the universal ribosomal protein uS19 family.

Functionally, protein S19 forms a complex with S13 that binds strongly to the 16S ribosomal RNA. This Vibrio atlanticus (strain LGP32) (Vibrio splendidus (strain Mel32)) protein is Small ribosomal subunit protein uS19.